Here is a 256-residue protein sequence, read N- to C-terminus: 6-carboxyhexanoate--CoA ligase (256 aa).

This sequence belongs to the BioW family. Homodimer. The cofactor is Mg(2+).

The enzyme catalyses heptanedioate + ATP + CoA = 6-carboxyhexanoyl-CoA + AMP + diphosphate. It participates in metabolic intermediate metabolism; pimeloyl-CoA biosynthesis; pimeloyl-CoA from pimelate: step 1/1. In terms of biological role, catalyzes the transformation of pimelate into pimeloyl-CoA with concomitant hydrolysis of ATP to AMP. The sequence is that of 6-carboxyhexanoate--CoA ligase from Bacillus amyloliquefaciens (strain ATCC 23350 / DSM 7 / BCRC 11601 / CCUG 28519 / NBRC 15535 / NRRL B-14393 / F).